Consider the following 163-residue polypeptide: 6,7-dimethyl-8-ribityllumazine synthase (163 aa).

5-amino-6-(D-ribitylamino)uracil contacts are provided by residues phenylalanine 27, 58–60 (ALE), and 87–89 (CVV). 92-93 (DT) provides a ligand contact to (2S)-2-hydroxy-3-oxobutyl phosphate. Histidine 95 functions as the Proton donor in the catalytic mechanism. Asparagine 120 contacts 5-amino-6-(D-ribitylamino)uracil. Residue arginine 134 coordinates (2S)-2-hydroxy-3-oxobutyl phosphate.

It belongs to the DMRL synthase family.

The catalysed reaction is (2S)-2-hydroxy-3-oxobutyl phosphate + 5-amino-6-(D-ribitylamino)uracil = 6,7-dimethyl-8-(1-D-ribityl)lumazine + phosphate + 2 H2O + H(+). The protein operates within cofactor biosynthesis; riboflavin biosynthesis; riboflavin from 2-hydroxy-3-oxobutyl phosphate and 5-amino-6-(D-ribitylamino)uracil: step 1/2. In terms of biological role, catalyzes the formation of 6,7-dimethyl-8-ribityllumazine by condensation of 5-amino-6-(D-ribitylamino)uracil with 3,4-dihydroxy-2-butanone 4-phosphate. This is the penultimate step in the biosynthesis of riboflavin. This chain is 6,7-dimethyl-8-ribityllumazine synthase, found in Nitrobacter hamburgensis (strain DSM 10229 / NCIMB 13809 / X14).